Reading from the N-terminus, the 154-residue chain is Leghemoglobin-1 (154 aa).

The region spanning 3–151 (VLTDVQVALV…LAIIIKKEMK (149 aa)) is the Globin domain. Position 46 (S46) interacts with heme b. The residue at position 46 (S46) is a Phosphoserine. H64 contacts O2. 3 residues coordinate heme b: K67, H98, and K101. A Nitrated tyrosine modification is found at Y139.

Belongs to the plant globin family. As to quaternary structure, monomer. Post-translationally, nitrated in effective nodules and particularly in hypoxic conditions; this mechanism may play a protective role in the symbiosis by buffering toxic peroxynitrite NO(2)(-). Nitration level decrease during nodule senescence. In terms of processing, phosphorylation at Ser-46 disrupts the molecular environment of its porphyrin ring oxygen binding pocket, thus leading to a reduced oxygen consumption and to the delivery of oxygen O(2) to symbiosomes. As to expression, accumulates in developing root nodules and present in roots, especially in the upper part. Detected in leaves at low levels.

The protein localises to the cytoplasm. It is found in the cytosol. Its subcellular location is the nucleus. In terms of biological role, leghemoglobin that reversibly binds oxygen O(2) through a pentacoordinated heme iron. In root nodules, facilitates the diffusion of oxygen to the bacteroids while preventing the bacterial nitrogenase from being inactivated by buffering dioxygen, nitric oxide and carbon monoxide, and promoting the formation of reactive oxygen species (ROS, e.g. H(2)O(2)). This role is essential for symbiotic nitrogen fixation (SNF). The polypeptide is Leghemoglobin-1 (Lupinus luteus (European yellow lupine)).